Reading from the N-terminus, the 403-residue chain is Acetylornithine aminotransferase (403 aa).

Residues 107 to 108 and Phe140 contribute to the pyridoxal 5'-phosphate site; that span reads GA. Residue Arg143 coordinates N(2)-acetyl-L-ornithine. 225-228 serves as a coordination point for pyridoxal 5'-phosphate; the sequence is DEVQ. Lys254 bears the N6-(pyridoxal phosphate)lysine mark. Ser282 contributes to the N(2)-acetyl-L-ornithine binding site. Thr283 contacts pyridoxal 5'-phosphate.

This sequence belongs to the class-III pyridoxal-phosphate-dependent aminotransferase family. ArgD subfamily. Homodimer. Pyridoxal 5'-phosphate is required as a cofactor.

The protein localises to the cytoplasm. It carries out the reaction N(2)-acetyl-L-ornithine + 2-oxoglutarate = N-acetyl-L-glutamate 5-semialdehyde + L-glutamate. It functions in the pathway amino-acid biosynthesis; L-arginine biosynthesis; N(2)-acetyl-L-ornithine from L-glutamate: step 4/4. This Vibrio parahaemolyticus serotype O3:K6 (strain RIMD 2210633) protein is Acetylornithine aminotransferase.